The primary structure comprises 132 residues: uncharacterized protein (132 aa).

It belongs to the mycobacterial PPE family.

This is an uncharacterized protein from Mycobacterium tuberculosis (strain ATCC 25618 / H37Rv).